The following is a 1755-amino-acid chain: Transposon Ty1-ML1 Gag-Pol polyprotein (1755 aa).

Polar residues-rich tracts occupy residues M1–S23, T48–S60, and Q127–F152. Disordered regions lie at residues M1–Q88, P126–P173, and G352–T421. Positions T153 to T165 are enriched in low complexity. Positions N299–H401 are RNA-binding. The span at N402–S418 shows a compositional bias: low complexity. Residue D461 is the For protease activity; shared with dimeric partner of the active site. Residues N583–C640 are integrase-type zinc finger-like. One can recognise an Integrase catalytic domain in the interval N660–P835. The Mg(2+) site is built by D671 and D736. Disordered stretches follow at residues S956–K1087, R1092–P1111, and D1130–A1171. Low complexity predominate over residues S960–T969. Polar residues predominate over residues S1005 to T1015. Residues E1038–S1053 show a composition bias toward basic and acidic residues. 2 stretches are compositionally biased toward polar residues: residues Y1054 to D1082 and P1101 to P1111. The Bipartite nuclear localization signal motif lies at K1178–R1212. Positions N1338–Q1476 constitute a Reverse transcriptase Ty1/copia-type domain. Residues D1346, D1427, D1428, D1610, E1652, and D1685 each coordinate Mg(2+). One can recognise an RNase H Ty1/copia-type domain in the interval D1610–K1752.

In terms of assembly, the capsid protein forms a homotrimer, from which the VLPs are assembled. The protease is a homodimer, whose active site consists of two apposed aspartic acid residues. Initially, virus-like particles (VLPs) are composed of the structural unprocessed proteins Gag and Gag-Pol, and also contain the host initiator methionine tRNA (tRNA(i)-Met) which serves as a primer for minus-strand DNA synthesis, and a dimer of genomic Ty RNA. Processing of the polyproteins occurs within the particle and proceeds by an ordered pathway, called maturation. First, the protease (PR) is released by autocatalytic cleavage of the Gag-Pol polyprotein yielding capsid protein p45 and a Pol-p154 precursor protein. This cleavage is a prerequisite for subsequent processing of Pol-p154 at the remaining sites to release the mature structural and catalytic proteins. Maturation takes place prior to the RT reaction and is required to produce transposition-competent VLPs.

It localises to the cytoplasm. It is found in the nucleus. It catalyses the reaction DNA(n) + a 2'-deoxyribonucleoside 5'-triphosphate = DNA(n+1) + diphosphate. The catalysed reaction is Endonucleolytic cleavage to 5'-phosphomonoester.. Capsid protein (CA) is the structural component of the virus-like particle (VLP), forming the shell that encapsulates the retrotransposons dimeric RNA genome. The particles are assembled from trimer-clustered units and there are holes in the capsid shells that allow for the diffusion of macromolecules. CA also has nucleocapsid-like chaperone activity, promoting primer tRNA(i)-Met annealing to the multipartite primer-binding site (PBS), dimerization of Ty1 RNA and initiation of reverse transcription. Its function is as follows. The aspartyl protease (PR) mediates the proteolytic cleavages of the Gag and Gag-Pol polyproteins after assembly of the VLP. In terms of biological role, reverse transcriptase/ribonuclease H (RT) is a multifunctional enzyme that catalyzes the conversion of the retro-elements RNA genome into dsDNA within the VLP. The enzyme displays a DNA polymerase activity that can copy either DNA or RNA templates, and a ribonuclease H (RNase H) activity that cleaves the RNA strand of RNA-DNA heteroduplexes during plus-strand synthesis and hydrolyzes RNA primers. The conversion leads to a linear dsDNA copy of the retrotransposon that includes long terminal repeats (LTRs) at both ends. Functionally, integrase (IN) targets the VLP to the nucleus, where a subparticle preintegration complex (PIC) containing at least integrase and the newly synthesized dsDNA copy of the retrotransposon must transit the nuclear membrane. Once in the nucleus, integrase performs the integration of the dsDNA into the host genome. This is Transposon Ty1-ML1 Gag-Pol polyprotein (TY1B-ML1) from Saccharomyces cerevisiae (strain ATCC 204508 / S288c) (Baker's yeast).